We begin with the raw amino-acid sequence, 347 residues long: MIEKRKEEHIRIAENENVSAFHNYWDDVYLMHEADPEVNYDDIDTGVDFLGKHLGFPMVISSMTGGAEIAKKINYNLATVAEKYQLAMGVGSMRAAIVNRSLSDTYSVINERNVPIKIANIGAPQLVPQGKEAIDEKDIAYIYDLIKADFLAVHFNFLQEMVQPEGDRNAEGVIKRIKELSGSFNIIAKETGSGFSKATAQRLADAGVKAIEVSGLSGTTFAAVEYYRAKNEGNAEKMRIGETFWNWGIPSPASVYYCSDVLPVIGSGGLRNGLDLAKAISLGASLGGFARTLLKDADQSVEAVSRNVEMIEREFKVAMFLTGNKNVYELRKTKKVIGEPLKEWMEV.

A substrate-binding site is contributed by 5-6 (RK). Residues serine 61, 62–64 (SMT), serine 92, and asparagine 120 each bind FMN. Substrate is bound at residue 92 to 94 (SMR). Glutamine 159 serves as a coordination point for substrate. Mg(2+) is bound at residue glutamate 160. FMN is bound by residues lysine 189, serine 214, threonine 219, 269-271 (GLR), and 290-291 (AR).

The protein belongs to the IPP isomerase type 2 family. In terms of assembly, homooctamer. Dimer of tetramers. The cofactor is FMN. NADPH serves as cofactor. It depends on Mg(2+) as a cofactor.

It is found in the cytoplasm. It carries out the reaction isopentenyl diphosphate = dimethylallyl diphosphate. Functionally, involved in the biosynthesis of isoprenoids. Catalyzes the 1,3-allylic rearrangement of the homoallylic substrate isopentenyl (IPP) to its allylic isomer, dimethylallyl diphosphate (DMAPP). The protein is Isopentenyl-diphosphate delta-isomerase of Thermoplasma volcanium (strain ATCC 51530 / DSM 4299 / JCM 9571 / NBRC 15438 / GSS1).